Consider the following 943-residue polypeptide: Protein translocase subunit SecA (943 aa).

Residues Q90, 108–112 (GEGKT), and D509 contribute to the ATP site. Residues 537-556 (NEHKPPIPKQRSSKSKGGFS) are disordered.

It belongs to the SecA family. In terms of assembly, monomer and homodimer. Part of the essential Sec protein translocation apparatus which comprises SecA, SecYEG and auxiliary proteins SecDF. Other proteins may also be involved.

It localises to the cell inner membrane. The protein resides in the cellular thylakoid membrane. Its subcellular location is the cytoplasm. The catalysed reaction is ATP + H2O + cellular proteinSide 1 = ADP + phosphate + cellular proteinSide 2.. Functionally, part of the Sec protein translocase complex. Interacts with the SecYEG preprotein conducting channel. Has a central role in coupling the hydrolysis of ATP to the transfer of proteins into and across the cell membrane, serving as an ATP-driven molecular motor driving the stepwise translocation of polypeptide chains across the membrane. In terms of biological role, probably participates in protein translocation into and across both the cytoplasmic and thylakoid membranes in cyanobacterial cells. The protein is Protein translocase subunit SecA of Prochlorococcus marinus (strain MIT 9301).